The sequence spans 153 residues: ORM1-like protein 3 (153 aa).

Positions 1–17 are important for ceramide level-sensing; sequence MNVGTAHSEVNPNTRVM. Residues 1-21 lie on the Cytoplasmic side of the membrane; that stretch reads MNVGTAHSEVNPNTRVMNSRG. The next 2 membrane-spanning stretches (helical) occupy residues 22-42 and 43-63; these read IWLS…SIPF and VSVP…MYIF. The Cytoplasmic segment spans residues 64-94; the sequence is LHTVKGTPFETPDQGKARLLTHWEQMDYGVQ. Residues 95 to 117 form a helical membrane-spanning segment; it reads FTASRKFLTITPIVLYFLTSFYT. Residues 118 to 121 lie on the Extracellular side of the membrane; that stretch reads KYDQ. A helical transmembrane segment spans residues 122 to 142; it reads IHFILNTVSLMSVLIPKLPQL. Residue Pro-137 is modified to Hydroxyproline. Topologically, residues 143–153 are cytoplasmic; sequence HGVRIFGINKY.

This sequence belongs to the ORM family. In terms of assembly, ceramide-sensitive subunit of the serine palmitoyltransferase (SPT) complex, which is also composed of SPTLC1, SPTLC2/3 and SPTSSA/B. Post-translationally, when hydroxylated at Pro-137, ubiquitinated via 'Lys-48'-linkage, leading to proteasomal degradation. In endothelial cells, ORMDL3 proteasomal degradation is controlled by the sphingosine 1-phosphate receptor signaling pathway.

It localises to the endoplasmic reticulum membrane. Its function is as follows. Plays an essential role in the homeostatic regulation of sphingolipid de novo biosynthesis by modulating the activity of the serine palmitoyltransferase (SPT) in response to ceramide levels. When complexed to SPT, the binding of ceramides to its N-terminus stabilizes a conformation that block SPT substrate entry, hence preventing SPT catalytic activity. Through this mechanism, maintains ceramide levels at sufficient concentrations for the production of complex sphingolipids, but which prevents the accumulation of ceramides to levels that trigger apoptosis. This is ORM1-like protein 3 (ORMDL3) from Bos taurus (Bovine).